The sequence spans 355 residues: tRNA uridine(34) hydroxylase (355 aa).

The 95-residue stretch at 146-240 (DDPDTVFVDM…YARQAKAQGL (95 aa)) folds into the Rhodanese domain. Cys-200 serves as the catalytic Cysteine persulfide intermediate.

This sequence belongs to the TrhO family.

It catalyses the reaction uridine(34) in tRNA + AH2 + O2 = 5-hydroxyuridine(34) in tRNA + A + H2O. Functionally, catalyzes oxygen-dependent 5-hydroxyuridine (ho5U) modification at position 34 in tRNAs. This is tRNA uridine(34) hydroxylase from Pectobacterium atrosepticum (strain SCRI 1043 / ATCC BAA-672) (Erwinia carotovora subsp. atroseptica).